The sequence spans 403 residues: Phosphoglycerate kinase (403 aa).

Substrate is bound by residues 21–23, R36, 59–62, R119, and R159; these read DFN and HLGR. ATP contacts are provided by residues K214, G301, E332, and 359-362; that span reads GGDS.

This sequence belongs to the phosphoglycerate kinase family. In terms of assembly, monomer.

The protein localises to the cytoplasm. The catalysed reaction is (2R)-3-phosphoglycerate + ATP = (2R)-3-phospho-glyceroyl phosphate + ADP. The protein operates within carbohydrate degradation; glycolysis; pyruvate from D-glyceraldehyde 3-phosphate: step 2/5. The sequence is that of Phosphoglycerate kinase from Lactobacillus helveticus (strain DPC 4571).